The primary structure comprises 369 residues: CCA-adding enzyme (369 aa).

Gly-8 and Arg-11 together coordinate ATP. The CTP site is built by Gly-8 and Arg-11. Mg(2+)-binding residues include Asp-21 and Asp-23. The ATP site is built by Arg-91, Arg-137, and Arg-140. 3 residues coordinate CTP: Arg-91, Arg-137, and Arg-140.

This sequence belongs to the tRNA nucleotidyltransferase/poly(A) polymerase family. Bacterial CCA-adding enzyme type 2 subfamily. Mg(2+) is required as a cofactor.

The enzyme catalyses a tRNA precursor + 2 CTP + ATP = a tRNA with a 3' CCA end + 3 diphosphate. The catalysed reaction is a tRNA with a 3' CCA end + 2 CTP + ATP = a tRNA with a 3' CCACCA end + 3 diphosphate. In terms of biological role, catalyzes the addition and repair of the essential 3'-terminal CCA sequence in tRNAs without using a nucleic acid template. Adds these three nucleotides in the order of C, C, and A to the tRNA nucleotide-73, using CTP and ATP as substrates and producing inorganic pyrophosphate. tRNA 3'-terminal CCA addition is required both for tRNA processing and repair. Also involved in tRNA surveillance by mediating tandem CCA addition to generate a CCACCA at the 3' terminus of unstable tRNAs. While stable tRNAs receive only 3'-terminal CCA, unstable tRNAs are marked with CCACCA and rapidly degraded. This chain is CCA-adding enzyme, found in Francisella tularensis subsp. novicida (strain U112).